A 265-amino-acid chain; its full sequence is Palmitoyltransferase ZDHHC21 (265 aa).

Residues 1 to 16 (MGLRIHFVVDPHGWCC) are Cytoplasmic-facing. The chain crosses the membrane as a helical span at residues 17–37 (MGLIVFVWLYNFFLIPKIVLF). Over 38 to 44 (PHYEEGH) the chain is Extracellular. Residues 45–65 (IPGILIIIFYGIAMFCLVALV) traverse the membrane as a helical segment. The Cytoplasmic portion of the chain corresponds to 66-133 (RASITDPGRL…NNCVGEDNHW (68 aa)). The 51-residue stretch at 90–140 (ELCNKCNLMRPKRSHHCSRCGHCVRRMDHHCPWINNCVGEDNHWLFLQLCF) folds into the DHHC domain. The S-palmitoyl cysteine intermediate role is filled by Cys120. Residues 134–154 (LFLQLCFYTELLTCYALMFSF) traverse the membrane as a helical segment. The Extracellular portion of the chain corresponds to 155 to 185 (CHYYYFLPLKKRNLDLFVVRHELAIMRLAAF). The helical transmembrane segment at 186-206 (MGITMLVGITGLFYTQLIGII) threads the bilayer. Residues 207–265 (TDTTSIEKMSNCCEEISRPRKPWQQTFSEVFGTRWKILWFIPFRRRQPLRVPYHFANHV) lie on the Cytoplasmic side of the membrane.

The protein belongs to the DHHC palmitoyltransferase family.

Its subcellular location is the golgi apparatus membrane. The protein localises to the golgi apparatus. It is found in the cis-Golgi network membrane. The protein resides in the cell membrane. The enzyme catalyses L-cysteinyl-[protein] + hexadecanoyl-CoA = S-hexadecanoyl-L-cysteinyl-[protein] + CoA. Its function is as follows. Palmitoyltransferase that catalyzes the addition of palmitate onto various protein substrates. Palmitoylates sex steroid hormone receptors, including ESR1, PGR and AR, thereby regulating their targeting to the plasma membrane. This affects rapid intracellular signaling by sex hormones via ERK and AKT kinases and the generation of cAMP, but does not affect that mediated by their nuclear receptor. Palmitoylates FYN, regulates its localization in hair follicles and plays a key role in epidermal homeostasis and hair follicle differentiation. Through the palmitoylation of PLCB1 and the regulation of PLCB1 downstream signaling may indirectly regulate the function of the endothelial barrier and the adhesion of leukocytes to the endothelium. Also has a palmitoyltransferase activity toward ADRA1D, positively regulating its activity and expression and may thereby play a role in vascular contraction. May also palmitoylate eNOS and LCK. In Bos taurus (Bovine), this protein is Palmitoyltransferase ZDHHC21.